Here is a 436-residue protein sequence, read N- to C-terminus: Phosphomethylpyrimidine synthase (436 aa).

Substrate contacts are provided by residues asparagine 69, methionine 98, tyrosine 127, histidine 163, 185–187 (SRG), 226–229 (DACR), and glutamate 265. Histidine 269 contributes to the Zn(2+) binding site. Tyrosine 292 is a substrate binding site. Histidine 333 is a binding site for Zn(2+). [4Fe-4S] cluster-binding residues include cysteine 409, cysteine 412, and cysteine 416.

It belongs to the ThiC family. [4Fe-4S] cluster serves as cofactor.

The enzyme catalyses 5-amino-1-(5-phospho-beta-D-ribosyl)imidazole + S-adenosyl-L-methionine = 4-amino-2-methyl-5-(phosphooxymethyl)pyrimidine + CO + 5'-deoxyadenosine + formate + L-methionine + 3 H(+). It participates in cofactor biosynthesis; thiamine diphosphate biosynthesis. Functionally, catalyzes the synthesis of the hydroxymethylpyrimidine phosphate (HMP-P) moiety of thiamine from aminoimidazole ribotide (AIR) in a radical S-adenosyl-L-methionine (SAM)-dependent reaction. This Clostridium acetobutylicum (strain ATCC 824 / DSM 792 / JCM 1419 / IAM 19013 / LMG 5710 / NBRC 13948 / NRRL B-527 / VKM B-1787 / 2291 / W) protein is Phosphomethylpyrimidine synthase.